Reading from the N-terminus, the 370-residue chain is MIASIVFFIVLVDGVATGSPNALVTDFDCRPGMKHCGVCQQLISGSTGANALCSYKGVGDFIVNNFSMGPVDWLWPSTAPSYAVVSESWGCVDDGAAFCDTTGNFRDHRGRVAREGRDGLGTVLIRPAGNGGPIDDCGADGFTQAIGTVVTTVTDYTRSERCAAVLVTVPPPNETVWYDGKCGFIPSSSSAAPPILGNMLLALIRAHPTLTLRMIQRILVRAAKPVTVTGWRGRGWWLNRVTDRWTHRNFGFGEVSPSRLEIEARRELSTSRAPVAWSTLDTCDLSEVEWVRVRLGIAPAVFRGGVTVEISSPSGTIIEILGKRPLDFSRDEFEGEFVTPFWGEPGRGKWTVSCTGGVILTTEGTCHGIR.

Positions 1 to 17 are cleaved as a signal peptide; sequence MIASIVFFIVLVDGVAT. Catalysis depends on charge relay system residues Asp-13, His-35, and Ser-190. The Peptidase S8 domain occupies 18-261; that stretch reads GSPNALVTDF…FGEVSPSRLE (244 aa). A P/Homo B domain is found at 240-370; the sequence is RVTDRWTHRN…TTEGTCHGIR (131 aa).

This sequence belongs to the peptidase S8 family.

The polypeptide is Subtilisin-like protease (ORF47) (Ictalurid herpesvirus 1 (strain Auburn) (IcHV-1)).